A 442-amino-acid chain; its full sequence is Probable carboxypeptidase PAAG_00768 (442 aa).

The first 20 residues, 1–20 (MKLQYLVALLFVQAVPPVTA), serve as a signal peptide directing secretion. Asparagine 102 carries N-linked (GlcNAc...) asparagine glycosylation. Aspartate 160 serves as a coordination point for Zn(2+). Glutamate 192 (proton acceptor) is an active-site residue. Zn(2+) is bound at residue glutamate 193. Asparagine 343 carries N-linked (GlcNAc...) asparagine glycosylation.

It belongs to the peptidase M20A family. The cofactor is Zn(2+).

The protein resides in the secreted. This chain is Probable carboxypeptidase PAAG_00768, found in Paracoccidioides lutzii (strain ATCC MYA-826 / Pb01) (Paracoccidioides brasiliensis).